The chain runs to 195 residues: Dephospho-CoA kinase (195 aa).

A DPCK domain is found at 3-195; the sequence is IVGLTGGIGS…IALHENYLNH (193 aa). Position 11-16 (11-16) interacts with ATP; the sequence is GSGKSA.

Belongs to the CoaE family.

Its subcellular location is the cytoplasm. It carries out the reaction 3'-dephospho-CoA + ATP = ADP + CoA + H(+). Its pathway is cofactor biosynthesis; coenzyme A biosynthesis; CoA from (R)-pantothenate: step 5/5. In terms of biological role, catalyzes the phosphorylation of the 3'-hydroxyl group of dephosphocoenzyme A to form coenzyme A. In Acinetobacter baylyi (strain ATCC 33305 / BD413 / ADP1), this protein is Dephospho-CoA kinase.